The chain runs to 116 residues: Bacterial microcompartment shell protein CutR (116 aa).

Residues 10–108 (RIIQESVPGK…LEYFKNSLGF (99 aa)) enclose the BMC circularly permuted domain.

It belongs to the EutS/PduU family. In terms of assembly, has been crystallized in 5 structures (all are mutated, 3 have an N-terminal His-tag), most are homohexameric with a central pore. In two the homohexamer lies flat with a beta-barrel on the flat face created by the protruding N termini of the six chains. In 2 others the hexamer is not flat but has a six-fold screw axis; the screw pitch is 33.8 or 41.9 Angstroms depending on the structure. Interacts with the BMC major shell protein.

The protein resides in the bacterial microcompartment. It functions in the pathway amine and polyamine metabolism; choline degradation. A minor shell protein of the choline degradation-specific bacterial microcompartment (BMC). Proteins such as this one with circularly permuted BMC domains may play a key role in conferring heterogeneity and flexibility in this BMC. The protein is Bacterial microcompartment shell protein CutR of Streptococcus intermedius (strain ATCC 27335 / DSM 20573 / CCUG 32759 / CIP 103248 / JCM 12996 / LMG 17840 / NCTC 11324 / SK54 / 1877).